Reading from the N-terminus, the 302-residue chain is Succinate--CoA ligase [ADP-forming] subunit alpha (302 aa).

CoA-binding positions include 17-20 (TGST), Lys-43, and 96-98 (ITE). Residue Tyr-159 coordinates substrate. His-247 (tele-phosphohistidine intermediate) is an active-site residue.

The protein belongs to the succinate/malate CoA ligase alpha subunit family. As to quaternary structure, heterotetramer of two alpha and two beta subunits.

It catalyses the reaction succinate + ATP + CoA = succinyl-CoA + ADP + phosphate. The catalysed reaction is GTP + succinate + CoA = succinyl-CoA + GDP + phosphate. The protein operates within carbohydrate metabolism; tricarboxylic acid cycle; succinate from succinyl-CoA (ligase route): step 1/1. Succinyl-CoA synthetase functions in the citric acid cycle (TCA), coupling the hydrolysis of succinyl-CoA to the synthesis of either ATP or GTP and thus represents the only step of substrate-level phosphorylation in the TCA. The alpha subunit of the enzyme binds the substrates coenzyme A and phosphate, while succinate binding and nucleotide specificity is provided by the beta subunit. This chain is Succinate--CoA ligase [ADP-forming] subunit alpha, found in Staphylococcus epidermidis (strain ATCC 12228 / FDA PCI 1200).